A 151-amino-acid polypeptide reads, in one-letter code: MAEGPSLHPKLQVDSNIPIEISSQIPQEPARNLAFQMRQSPLVTPGSTTKSSLSVPERNLLKQESEGPSRQSGCMPLSDKYVNKQTSPMASRKFRKERTVYTKEEQGLLQKHFDECSTQTRRKLWSWHYQLVLQRGRLRYGSRTTELSTGR.

The disordered stretch occupies residues 1–97 (MAEGPSLHPK…PMASRKFRKE (97 aa)). The span at 37 to 54 (MRQSPLVTPGSTTKSSLS) shows a compositional bias: polar residues.

It belongs to the paired homeobox family. Obox subfamily. Specifically expressed in oocytes and early embryos.

Its function is as follows. In contrast to other Obox family proteins, displays a truncated homeobox domain and does not bind DNA. This chain is Inactive oocyte-specific homeobox protein 2, found in Mus musculus (Mouse).